A 616-amino-acid polypeptide reads, in one-letter code: Origin recognition complex subunit 3 (616 aa).

Position 2 is an N-acetylserine (Ser-2).

The protein belongs to the ORC3 family. As to quaternary structure, component of the origin recognition complex (ORC) composed of at least ORC1, ORC2, ORC3, ORC4, ORC5 and ORC6. Interacts with ORC6.

It localises to the nucleus. Component of the origin recognition complex (ORC) that binds origins of replication. It has a role in both chromosomal replication and mating type transcriptional silencing. Binds to the ARS consensus sequence (ACS) of origins of replication. The protein is Origin recognition complex subunit 3 (ORC3) of Saccharomyces cerevisiae (strain ATCC 204508 / S288c) (Baker's yeast).